The chain runs to 396 residues: Tryptophan synthase beta chain (396 aa).

Lys86 bears the N6-(pyridoxal phosphate)lysine mark.

Belongs to the TrpB family. Tetramer of two alpha and two beta chains. The cofactor is pyridoxal 5'-phosphate.

It catalyses the reaction (1S,2R)-1-C-(indol-3-yl)glycerol 3-phosphate + L-serine = D-glyceraldehyde 3-phosphate + L-tryptophan + H2O. Its pathway is amino-acid biosynthesis; L-tryptophan biosynthesis; L-tryptophan from chorismate: step 5/5. Its function is as follows. The beta subunit is responsible for the synthesis of L-tryptophan from indole and L-serine. The protein is Tryptophan synthase beta chain of Serratia proteamaculans (strain 568).